A 612-amino-acid polypeptide reads, in one-letter code: Dihydroxy-acid dehydratase (612 aa).

Aspartate 81 serves as a coordination point for Mg(2+). Cysteine 122 lines the [2Fe-2S] cluster pocket. The Mg(2+) site is built by aspartate 123 and lysine 124. Lysine 124 is subject to N6-carboxylysine. Cysteine 193 contacts [2Fe-2S] cluster. Glutamate 489 provides a ligand contact to Mg(2+). Serine 515 acts as the Proton acceptor in catalysis.

It belongs to the IlvD/Edd family. As to quaternary structure, homodimer. [2Fe-2S] cluster serves as cofactor. The cofactor is Mg(2+).

The enzyme catalyses (2R)-2,3-dihydroxy-3-methylbutanoate = 3-methyl-2-oxobutanoate + H2O. It carries out the reaction (2R,3R)-2,3-dihydroxy-3-methylpentanoate = (S)-3-methyl-2-oxopentanoate + H2O. Its pathway is amino-acid biosynthesis; L-isoleucine biosynthesis; L-isoleucine from 2-oxobutanoate: step 3/4. It participates in amino-acid biosynthesis; L-valine biosynthesis; L-valine from pyruvate: step 3/4. Functions in the biosynthesis of branched-chain amino acids. Catalyzes the dehydration of (2R,3R)-2,3-dihydroxy-3-methylpentanoate (2,3-dihydroxy-3-methylvalerate) into 2-oxo-3-methylpentanoate (2-oxo-3-methylvalerate) and of (2R)-2,3-dihydroxy-3-methylbutanoate (2,3-dihydroxyisovalerate) into 2-oxo-3-methylbutanoate (2-oxoisovalerate), the penultimate precursor to L-isoleucine and L-valine, respectively. The polypeptide is Dihydroxy-acid dehydratase (Teredinibacter turnerae (strain ATCC 39867 / T7901)).